We begin with the raw amino-acid sequence, 100 residues long: Small ribosomal subunit protein uS14c (100 aa).

A compositionally biased stretch (basic and acidic residues) spans 28-45; sequence KKEIKKVPSLSEKMEIHG. The disordered stretch occupies residues 28–59; sequence KKEIKKVPSLSEKMEIHGKLQSPPRNSAPTRL.

This sequence belongs to the universal ribosomal protein uS14 family. In terms of assembly, part of the 30S ribosomal subunit.

It is found in the plastid. Its subcellular location is the chloroplast. In terms of biological role, binds 16S rRNA, required for the assembly of 30S particles. This chain is Small ribosomal subunit protein uS14c, found in Nandina domestica (Heavenly bamboo).